Consider the following 379-residue polypeptide: Cytochrome b (379 aa).

Transmembrane regions (helical) follow at residues 34 to 54 (FGSLLGICLITQILTGLLLAT), 78 to 99 (WLIRNLHANGASFFFICIYLHI), 114 to 134 (WNIGIILLLTLMATAFVGYVL), and 179 to 199 (FFALHFLLPFLIVSLSIIHLT). Positions 84 and 98 each coordinate heme b. Residues His-183 and His-197 each coordinate heme b. His-202 is an a ubiquinone binding site. 4 consecutive transmembrane segments (helical) span residues 227-247 (TKDMLGFTLMFFPLLTLAFFF), 289-309 (LGGVLALTASVLILFLSPLLH), 321-341 (MSQLLFWLLIANLLILTWIGS), and 348-368 (FIIIGQVASFTYFFTLLFLFP).

Belongs to the cytochrome b family. As to quaternary structure, the cytochrome bc1 complex contains 11 subunits: 3 respiratory subunits (MT-CYB, CYC1 and UQCRFS1), 2 core proteins (UQCRC1 and UQCRC2) and 6 low-molecular weight proteins (UQCRH/QCR6, UQCRB/QCR7, UQCRQ/QCR8, UQCR10/QCR9, UQCR11/QCR10 and a cleavage product of UQCRFS1). This cytochrome bc1 complex then forms a dimer. It depends on heme b as a cofactor.

The protein localises to the mitochondrion inner membrane. Functionally, component of the ubiquinol-cytochrome c reductase complex (complex III or cytochrome b-c1 complex) that is part of the mitochondrial respiratory chain. The b-c1 complex mediates electron transfer from ubiquinol to cytochrome c. Contributes to the generation of a proton gradient across the mitochondrial membrane that is then used for ATP synthesis. This chain is Cytochrome b (MT-CYB), found in Tinamus major (Great tinamou).